The following is a 499-amino-acid chain: uncharacterized protein (499 aa).

2 disordered regions span residues 76–118 and 208–268; these read QATA…RLSP and DFET…DWAN. A compositionally biased stretch (basic and acidic residues) spans 87 to 104; it reads DPEKQTGKSRYHPSEEIR. A compositionally biased stretch (acidic residues) spans 208–263; that stretch reads DFETEDDESGDDDSEDTGEDEDEEEWVAILEDEDEDDDDDDDDDEDDDDSDSDESL. Ser355 is modified (phosphoserine). The tract at residues 478-499 is disordered; sequence AEGQIRKLLFPKTNQSTQPKPK. Residues 489–499 show a composition bias toward polar residues; the sequence is KTNQSTQPKPK.

This is an uncharacterized protein from Arabidopsis thaliana (Mouse-ear cress).